We begin with the raw amino-acid sequence, 372 residues long: Glutamate 5-kinase (372 aa).

Position 14 (Lys14) interacts with ATP. Positions 54, 141, and 153 each coordinate substrate. ATP contacts are provided by residues 173–174 and 215–221; these read TD and TGGMITK. The 79-residue stretch at 280-358 folds into the PUA domain; that stretch reads AGRLLLDDGA…REIEAALGYI (79 aa).

This sequence belongs to the glutamate 5-kinase family.

It localises to the cytoplasm. It carries out the reaction L-glutamate + ATP = L-glutamyl 5-phosphate + ADP. It participates in amino-acid biosynthesis; L-proline biosynthesis; L-glutamate 5-semialdehyde from L-glutamate: step 1/2. Its function is as follows. Catalyzes the transfer of a phosphate group to glutamate to form L-glutamate 5-phosphate. The sequence is that of Glutamate 5-kinase from Chromobacterium violaceum (strain ATCC 12472 / DSM 30191 / JCM 1249 / CCUG 213 / NBRC 12614 / NCIMB 9131 / NCTC 9757 / MK).